A 23-amino-acid polypeptide reads, in one-letter code: Basic phospholipase A2 mangshantoxin (23 aa).

This sequence belongs to the phospholipase A2 family. Group II subfamily. It depends on Ca(2+) as a cofactor. Contains 7 disulfide bonds. Expressed by the venom gland.

The protein resides in the secreted. It catalyses the reaction a 1,2-diacyl-sn-glycero-3-phosphocholine + H2O = a 1-acyl-sn-glycero-3-phosphocholine + a fatty acid + H(+). Snake venom phospholipase A2 (PLA2) that displays presynaptic neurotoxicity. PLA2 catalyzes the calcium-dependent hydrolysis of the 2-acyl groups in 3-sn-phosphoglycerides. The polypeptide is Basic phospholipase A2 mangshantoxin (Protobothrops mangshanensis (Mangshan pitviper)).